A 426-amino-acid polypeptide reads, in one-letter code: Dihydroorotase (426 aa).

Histidine 58 and histidine 60 together coordinate Zn(2+). Substrate contacts are provided by residues 60–62 (HLR) and asparagine 92. Positions 150, 177, and 230 each coordinate Zn(2+). Substrate is bound at residue asparagine 276. Zn(2+) is bound at residue aspartate 303. Aspartate 303 is an active-site residue. Residues histidine 307 and 321 to 322 (FG) each bind substrate.

This sequence belongs to the metallo-dependent hydrolases superfamily. DHOase family. Class I DHOase subfamily. The cofactor is Zn(2+).

It carries out the reaction (S)-dihydroorotate + H2O = N-carbamoyl-L-aspartate + H(+). Its pathway is pyrimidine metabolism; UMP biosynthesis via de novo pathway; (S)-dihydroorotate from bicarbonate: step 3/3. Functionally, catalyzes the reversible cyclization of carbamoyl aspartate to dihydroorotate. The protein is Dihydroorotase of Listeria monocytogenes serotype 4a (strain HCC23).